Here is an 843-residue protein sequence, read N- to C-terminus: Pentatricopeptide repeat-containing protein At4g21880, mitochondrial (843 aa).

PPR repeat units lie at residues S392 to I426, S427 to P461, N462 to P496, N497 to P531, D532 to E562, N564 to P594, and H598 to V632.

This sequence belongs to the PPR family. P subfamily.

It localises to the mitochondrion. The polypeptide is Pentatricopeptide repeat-containing protein At4g21880, mitochondrial (Arabidopsis thaliana (Mouse-ear cress)).